The primary structure comprises 90 residues: MSSSISAPEGIINPPIDELLEATDSKYSLVIYAAKRARQINAYYSQLGEGLLEYVGPLVDTHVHEKPLSIALREINAGLLTSEAIEGPAQ.

This sequence belongs to the RNA polymerase subunit omega family. In terms of assembly, the RNAP catalytic core consists of 2 alpha, 1 beta, 1 beta' and 1 omega subunit. When a sigma factor is associated with the core the holoenzyme is formed, which can initiate transcription.

It catalyses the reaction RNA(n) + a ribonucleoside 5'-triphosphate = RNA(n+1) + diphosphate. Functionally, promotes RNA polymerase assembly. Latches the N- and C-terminal regions of the beta' subunit thereby facilitating its interaction with the beta and alpha subunits. The sequence is that of DNA-directed RNA polymerase subunit omega (rpoZ) from Streptomyces coelicolor (strain ATCC BAA-471 / A3(2) / M145).